The chain runs to 350 residues: UDP-N-acetylenolpyruvoylglucosamine reductase (350 aa).

Positions 25-194 constitute an FAD-binding PCMH-type domain; the sequence is VGPVARRLIT…LDVGGRSAPL (170 aa). R166 is an active-site residue. The active-site Proton donor is the S243. E342 is an active-site residue.

This sequence belongs to the MurB family. It depends on FAD as a cofactor.

The protein localises to the cytoplasm. The catalysed reaction is UDP-N-acetyl-alpha-D-muramate + NADP(+) = UDP-N-acetyl-3-O-(1-carboxyvinyl)-alpha-D-glucosamine + NADPH + H(+). It functions in the pathway cell wall biogenesis; peptidoglycan biosynthesis. Cell wall formation. This chain is UDP-N-acetylenolpyruvoylglucosamine reductase, found in Mycobacterium sp. (strain MCS).